The sequence spans 89 residues: Small ribosomal subunit protein uS15 (89 aa).

Positions 1–25 (MSLSAEQKGEIVKKHARTASDTGSP) are disordered.

This sequence belongs to the universal ribosomal protein uS15 family. As to quaternary structure, part of the 30S ribosomal subunit. Forms a bridge to the 50S subunit in the 70S ribosome, contacting the 23S rRNA.

One of the primary rRNA binding proteins, it binds directly to 16S rRNA where it helps nucleate assembly of the platform of the 30S subunit by binding and bridging several RNA helices of the 16S rRNA. In terms of biological role, forms an intersubunit bridge (bridge B4) with the 23S rRNA of the 50S subunit in the ribosome. The protein is Small ribosomal subunit protein uS15 of Alkalilimnicola ehrlichii (strain ATCC BAA-1101 / DSM 17681 / MLHE-1).